The following is a 359-amino-acid chain: Guanine nucleotide-binding protein G(q) subunit alpha (359 aa).

2 S-palmitoyl cysteine lipidation sites follow: cysteine 9 and cysteine 10. The region spanning 38–359 is the G-alpha domain; the sequence is RELKLLLLGT…QLNLKEYNLV (322 aa). The tract at residues 41-54 is G1 motif; it reads KLLLLGTGESGKST. Serine 50, glycine 51, lysine 52, serine 53, threonine 54, serine 156, leucine 180, arginine 181, and arginine 183 together coordinate GTP. Position 53 (serine 53) interacts with Mg(2+). Positions 178-186 are G2 motif; the sequence is DVLRVRVPT. Threonine 186 lines the Mg(2+) pocket. Residues 201 to 210 form a G3 motif region; the sequence is FRMVDVGGQR. Glutamine 209 bears the 5-glutamyl histamine mark. Positions 270–277 are G4 motif; sequence ILFLNKKD. Residues asparagine 274, lysine 275, aspartate 277, and alanine 331 each coordinate GTP. The interval 329–334 is G5 motif; sequence TCATDT.

Belongs to the G-alpha family. G(q) subfamily. In terms of assembly, g proteins are composed of 3 units; alpha, beta and gamma. The alpha chain contains the guanine nucleotide binding site. Interacts (GDP-bound form) with RIC8A (via C-terminus); promoting GNAQ folding and association with the plasma membrane. Binds NHERF1. Forms a complex with PECAM1 and BDKRB2. Interacts with GAS2L2. Post-translationally, palmitoylated by ZDHHC3 and ZDHHC7. Palmitoylation occurs in the Golgi and participates in the localization of GNAQ to the plasma membrane. Histaminylated at Gln-209 residues by TGM2.

It localises to the cell membrane. Its subcellular location is the golgi apparatus. The protein resides in the nucleus. It is found in the nucleus membrane. It carries out the reaction GTP + H2O = GDP + phosphate + H(+). Functionally, guanine nucleotide-binding proteins (G proteins) function as transducers downstream of G protein-coupled receptors (GPCRs) in numerous signaling cascades. The alpha chain contains the guanine nucleotide binding site and alternates between an active, GTP-bound state and an inactive, GDP-bound state. Signaling by an activated GPCR promotes GDP release and GTP binding. The alpha subunit has a low GTPase activity that converts bound GTP to GDP, thereby terminating the signal. Both GDP release and GTP hydrolysis are modulated by numerous regulatory proteins. Signaling is mediated via phospholipase C-beta-dependent inositol lipid hydrolysis for signal propagation: activates phospholipase C-beta: following GPCR activation, GNAQ activates PLC-beta (PLCB1, PLCB2, PLCB3 or PLCB4), leading to production of diacylglycerol (DAG) and inositol 1,4,5-trisphosphate (IP3). Required for platelet activation. Regulates B-cell selection and survival and is required to prevent B-cell-dependent autoimmunity. Regulates chemotaxis of BM-derived neutrophils and dendritic cells (in vitro). Transduces FFAR4 signaling in response to long-chain fatty acids (LCFAs). Together with GNA11, required for heart development. The sequence is that of Guanine nucleotide-binding protein G(q) subunit alpha (GNAQ) from Canis lupus familiaris (Dog).